Reading from the N-terminus, the 173-residue chain is Ribulose bisphosphate carboxylase small subunit, chloroplastic 1 (173 aa).

Residues 1 to 52 (MMVSTAAVARVRPAQTNMVGAFNGCRSSVAFPATRKANNDLSTLPSSGGRVS) constitute a chloroplast transit peptide.

It belongs to the RuBisCO small chain family. In terms of assembly, heterohexadecamer of 8 large and 8 small subunits.

It localises to the plastid. It is found in the chloroplast. Functionally, ruBisCO catalyzes two reactions: the carboxylation of D-ribulose 1,5-bisphosphate, the primary event in carbon dioxide fixation, as well as the oxidative fragmentation of the pentose substrate. Both reactions occur simultaneously and in competition at the same active site. Although the small subunit is not catalytic it is essential for maximal activity. The chain is Ribulose bisphosphate carboxylase small subunit, chloroplastic 1 from Lemna gibba (Swollen duckweed).